Here is a 119-residue protein sequence, read N- to C-terminus: Large ribosomal subunit protein bL20 (119 aa).

This sequence belongs to the bacterial ribosomal protein bL20 family.

Its function is as follows. Binds directly to 23S ribosomal RNA and is necessary for the in vitro assembly process of the 50S ribosomal subunit. It is not involved in the protein synthesizing functions of that subunit. The polypeptide is Large ribosomal subunit protein bL20 (Bacillus pumilus (strain SAFR-032)).